Here is a 422-residue protein sequence, read N- to C-terminus: Keratan-sulfate endo-1,4-beta-galactosidase (422 aa).

Positions 1 to 46 (MRKTKFWLVLSLIATSLSIFACKKDSTATKNPIPEVSKAKASTKLL) are cleaved as a signal peptide. Residues 47-292 (NATTVATTDY…YVRVYKLPLF (246 aa)) form the GH16 domain. Glu171 acts as the Nucleophile in catalysis. Glu176 functions as the Proton donor in the catalytic mechanism. The CBM-cenC domain maps to 291–406 (LFSNGDFESG…NTTATVYFYK (116 aa)).

This sequence belongs to the glycosyl hydrolase 16 family.

The protein resides in the secreted. The catalysed reaction is Endohydrolysis of (1-&gt;4)-beta-D-galactosidic linkages in keratan sulfate.. Functionally, hydrolyzes internal endo-beta-galactosyl linkages in keratan sulfate and in various neolacto-type glycosphingolipids, producing sulfated and non-sulfated disaccharides, and glucosylceramides respectivly. The protein is Keratan-sulfate endo-1,4-beta-galactosidase of Sphingobacterium multivorum.